Reading from the N-terminus, the 611-residue chain is MRTAMAKSLGAAAFLGAALFAHTLAAQTATCSYNITNEWNTGYTGDITITNRGSSAINGWSVNWQYATNRLSSSWNANVSGSNPYSASNLSWNGNIQPGQSVSFGFQVNKNGGSAERPSVGGSICSGSVASSSAPASSVPSSIASSSPSSVASSVISSMASSSPVSSSSVASSTPGSSSGNQQCNWYGTLYPLCVTTTNGWGWEDQRSCIARSTCAAQPAPFGIVGSGSSTPVSSSSSSLSSSSVVSSIRSSSSSSSSSVATGNGLASLADFPIGVAVAASGGNADIFTSSARQNIVRAEFNQITAENIMKMSYMYSGSNFSFTNSDRLVSWAAQNGQTVHGHALVWHPSYQLPNWASDSNANFRQDFARHIDTVAAHFAGQVKSWDVVNEALFDSADDPDGRGSANGYRQSVFYRQFGGPEYIDEAFRRARAADPTAELYYNDFNTEENGAKTTALVNLVQRLLNNGVPIDGVGFQMHVMNDYPSIANIRQAMQKIVALSPTLKIKITELDVRLNNPYDGNSSNDYTNRNDCAVSCAGLDRQKARYKEIVQAYLEVVPPGRRGGITVWGIADPDSWLYTHQNLPDWPLLFNDNLQPKPAYQGVVEALSGR.

The signal sequence occupies residues 1 to 26; sequence MRTAMAKSLGAAAFLGAALFAHTLAA. Residues 27-128 enclose the CBM2 domain; that stretch reads QTATCSYNIT…SVGGSICSGS (102 aa). 3 cysteine pairs are disulfide-bonded: Cys31–Cys125, Cys184–Cys215, and Cys194–Cys209. Residues 183–212 enclose the CBM10 domain; the sequence is QCNWYGTLYPLCVTTTNGWGWEDQRSCIAR. The region spanning 281–607 is the GH10 domain; it reads SGGNADIFTS…KPAYQGVVEA (327 aa). The active-site Proton donor is the Glu391. The active-site Nucleophile is Glu510.

It belongs to the glycosyl hydrolase 10 (cellulase F) family.

The catalysed reaction is Endohydrolysis of (1-&gt;4)-beta-D-xylosidic linkages in xylans.. Its pathway is glycan degradation; xylan degradation. This is Endo-1,4-beta-xylanase A (xynA) from Cellvibrio japonicus (strain Ueda107) (Pseudomonas fluorescens subsp. cellulosa).